Here is a 279-residue protein sequence, read N- to C-terminus: Pantothenate synthetase (279 aa).

31–38 (MGNLHGGH) is a binding site for ATP. The active-site Proton donor is His-38. Gln-62 lines the (R)-pantoate pocket. Position 62 (Gln-62) interacts with beta-alanine. Residue 150–153 (GRKD) participates in ATP binding. A (R)-pantoate-binding site is contributed by Gln-156. Residues Val-179 and 187 to 190 (KSSR) each bind ATP.

Belongs to the pantothenate synthetase family. In terms of assembly, homodimer.

The protein localises to the cytoplasm. The catalysed reaction is (R)-pantoate + beta-alanine + ATP = (R)-pantothenate + AMP + diphosphate + H(+). It functions in the pathway cofactor biosynthesis; (R)-pantothenate biosynthesis; (R)-pantothenate from (R)-pantoate and beta-alanine: step 1/1. Its function is as follows. Catalyzes the condensation of pantoate with beta-alanine in an ATP-dependent reaction via a pantoyl-adenylate intermediate. The chain is Pantothenate synthetase from Stenotrophomonas maltophilia (strain R551-3).